Consider the following 141-residue polypeptide: Hemoglobin subunit alpha-A (141 aa).

The Globin domain maps to 1-141; it reads VLNAGDKANV…VGTVLTSKYR (141 aa). H58 lines the O2 pocket. Position 87 (H87) interacts with heme b.

It belongs to the globin family. Heterotetramer of two alpha chains and two beta chains. In terms of tissue distribution, red blood cells.

In terms of biological role, involved in oxygen transport from the lung to the various peripheral tissues. This is Hemoglobin subunit alpha-A (HBAA) from Chrysemys picta bellii (Western painted turtle).